The following is a 526-amino-acid chain: Cytochrome P450 monooxygenase BOT4 (526 aa).

Asn-5 carries N-linked (GlcNAc...) asparagine glycosylation. A helical transmembrane segment spans residues 41-61 (CLVAIILCRFIAVWSYNLWFH). Asn-205 and Asn-281 each carry an N-linked (GlcNAc...) asparagine glycan. Cys-464 is a heme binding site.

It belongs to the cytochrome P450 family. Heme serves as cofactor.

The protein localises to the membrane. It participates in secondary metabolite biosynthesis. In terms of biological role, cytochrome P450 monooxygenase; part of the gene cluster that mediates the biosynthesis of botrydial. Botrydial is necessary for colonization of plant tissue by the T4 strain. It is a strain-dependent virulence factor since highly aggressive strains like SAS56 or B05 still retain substantial virulence when botrydial synthesis is impaired, since they produce also botcinic acid. The first step of botrydial biosynthesis is performed by the sesquiterpene synthase BOT2 which catalyzes the cyclization of farnesyl diphosphate (FPP) to presilphiperfolan-8-beta-ol (PSP). The cytochrome P450 monooxygenase BOT4 then catalyzes the hydroxylation at C-4 to give a probotryane intermediate. Acetylation of the hydroxyl at C-4 is carried out by the acetyltransferase BOT5, followed by the combined action of the P450 monooxygenases BOT3 and BOT1, to yield finally the glycol, via the regio- and stereospecific hydroxylations at C-10 and C-15 of the probotryane intermediates, respectively. The cleavage of the C10-C15 bond of probotryane skeleton is an intriguing and chemically important reaction, which could be mediated by some of the monooxygenases or by a combination of them. It is possible that either BOT3 or BOT1 would oxidize either the 10- or the 15-hydroxy group to the hydroperoxide derivative, which would then undergo heterolytic fragmentation to give the dialdehyde botrydial. Finally, the dehydrogenase BOT7 might be involved in the conversion of botrydial to dihydrobotrydial. This Botryotinia fuckeliana (Noble rot fungus) protein is Cytochrome P450 monooxygenase BOT4.